The sequence spans 651 residues: Acetyl-coenzyme A synthetase (651 aa).

Residues 191 to 194 (RGGK), Thr311, and Asn335 each bind CoA. Residues 387 to 389 (GEP), 411 to 416 (DTWWQT), Asp500, and Arg515 contribute to the ATP site. CoA is bound at residue Ser523. ATP is bound at residue Arg526. Val537, His539, and Val542 together coordinate Mg(2+). A CoA-binding site is contributed by Arg584. Lys609 carries the N6-acetyllysine modification.

It belongs to the ATP-dependent AMP-binding enzyme family. Mg(2+) is required as a cofactor. Acetylated. Deacetylation by the SIR2-homolog deacetylase activates the enzyme.

The enzyme catalyses acetate + ATP + CoA = acetyl-CoA + AMP + diphosphate. Its function is as follows. Catalyzes the conversion of acetate into acetyl-CoA (AcCoA), an essential intermediate at the junction of anabolic and catabolic pathways. AcsA undergoes a two-step reaction. In the first half reaction, AcsA combines acetate with ATP to form acetyl-adenylate (AcAMP) intermediate. In the second half reaction, it can then transfer the acetyl group from AcAMP to the sulfhydryl group of CoA, forming the product AcCoA. In Pseudomonas syringae pv. syringae (strain B728a), this protein is Acetyl-coenzyme A synthetase.